A 75-amino-acid polypeptide reads, in one-letter code: UPF0352 protein KPN78578_25810 (75 aa).

The protein belongs to the UPF0352 family.

This chain is UPF0352 protein KPN78578_25810, found in Klebsiella pneumoniae subsp. pneumoniae (strain ATCC 700721 / MGH 78578).